Reading from the N-terminus, the 463-residue chain is UDP-N-acetylmuramate--L-alanine ligase (463 aa).

112–118 (GTHGKTT) serves as a coordination point for ATP.

Belongs to the MurCDEF family.

It is found in the cytoplasm. It carries out the reaction UDP-N-acetyl-alpha-D-muramate + L-alanine + ATP = UDP-N-acetyl-alpha-D-muramoyl-L-alanine + ADP + phosphate + H(+). It functions in the pathway cell wall biogenesis; peptidoglycan biosynthesis. Cell wall formation. The sequence is that of UDP-N-acetylmuramate--L-alanine ligase from Dechloromonas aromatica (strain RCB).